A 433-amino-acid chain; its full sequence is Glutamate-1-semialdehyde 2,1-aminomutase (433 aa).

N6-(pyridoxal phosphate)lysine is present on lysine 266.

Belongs to the class-III pyridoxal-phosphate-dependent aminotransferase family. HemL subfamily. In terms of assembly, homodimer. The cofactor is pyridoxal 5'-phosphate.

The protein resides in the cytoplasm. It carries out the reaction (S)-4-amino-5-oxopentanoate = 5-aminolevulinate. The protein operates within porphyrin-containing compound metabolism; protoporphyrin-IX biosynthesis; 5-aminolevulinate from L-glutamyl-tRNA(Glu): step 2/2. In Psychrobacter arcticus (strain DSM 17307 / VKM B-2377 / 273-4), this protein is Glutamate-1-semialdehyde 2,1-aminomutase.